The following is a 227-amino-acid chain: NAD(P)H-hydrate epimerase (227 aa).

Residues 12 to 221 (SRLVDELAIA…DIGVPRALLE (210 aa)) form the YjeF N-terminal domain. Residue 59–63 (NNGGD) coordinates (6S)-NADPHX. K(+)-binding residues include N60 and D131. Residues 135-141 (GTGATGE) and D164 each bind (6S)-NADPHX. Residue T167 coordinates K(+).

This sequence belongs to the NnrE/AIBP family. It depends on K(+) as a cofactor.

The enzyme catalyses (6R)-NADHX = (6S)-NADHX. It catalyses the reaction (6R)-NADPHX = (6S)-NADPHX. In terms of biological role, catalyzes the epimerization of the S- and R-forms of NAD(P)HX, a damaged form of NAD(P)H that is a result of enzymatic or heat-dependent hydration. This is a prerequisite for the S-specific NAD(P)H-hydrate dehydratase to allow the repair of both epimers of NAD(P)HX. The sequence is that of NAD(P)H-hydrate epimerase from Pirellula staleyi (strain ATCC 27377 / DSM 6068 / ICPB 4128) (Pirella staleyi).